The sequence spans 520 residues: Beta-2-syntrophin (520 aa).

The tract at residues 45–95 (EPPAAAFNGLPNGGGGESLPGSPNRGLGPPSPPAPPRGPAGEASASPPVRR) is disordered. The segment covering 63-72 (LPGSPNRGLG) has biased composition (low complexity). Over residues 73-82 (PPSPPAPPRG) the composition is skewed to pro residues. 8 positions are modified to phosphoserine: Ser-75, Ser-90, Ser-109, Ser-191, Ser-202, Ser-213, Ser-373, and Ser-375. Low complexity predominate over residues 83 to 93 (PAGEASASPPV). The PDZ domain occupies 95-178 (RVRVVKQEAG…EVLLEVKFIR (84 aa)). PH domains follow at residues 143 to 280 (ILSV…TNIM) and 305 to 417 (EVKH…QGCH). The disordered stretch occupies residues 195-220 (WEGASPQSPSFSGSEDSGSPKHQNTT). The span at 197–211 (GASPQSPSFSGSEDS) shows a compositional bias: low complexity. Positions 464–520 (PFERLKMSADDGIRNLYLDFGGPEGELTMDLHSCPKPIVFVLHTFLSAKVTRMGLLV) constitute an SU domain. A calmodulin-binding region spans residues 498–520 (PKPIVFVLHTFLSAKVTRMGLLV).

It belongs to the syntrophin family. In terms of assembly, monomer and homodimer. Interacts with the dystrophin protein DMD and related protein DTNA; and with the other members of the syntrophin family: SNTA1 and SNTB1. Interacts with the neuroregulin receptor ERBB4. Interacts with PTPRN when phosphorylated, protecting PTPRN from protein cleavage by CAPN1. Dephosphorylation upon insulin stimulation disrupts the interaction with PTPRN and results in the cleavage of PTPRN. Interacts with the sodium channel proteins SCN4A and SCN5A. Interacts with SAST, MAST205, microtubules and microtubule-associated proteins. Interacts with the dystrophin related protein UTRN. Interacts with DTNB. In terms of processing, phosphorylated. Partially dephosphorylated upon insulin stimulation. As to expression, ubiquitous. Expressed at high levels in the testis.

The protein resides in the membrane. Its subcellular location is the cytoplasmic vesicle. The protein localises to the secretory vesicle membrane. It localises to the cell junction. It is found in the cytoplasm. The protein resides in the cytoskeleton. Its function is as follows. Adapter protein that binds to and probably organizes the subcellular localization of a variety of membrane proteins. May link various receptors to the actin cytoskeleton and the dystrophin glycoprotein complex. May play a role in the regulation of secretory granules via its interaction with PTPRN. This chain is Beta-2-syntrophin (Sntb2), found in Mus musculus (Mouse).